Consider the following 743-residue polypeptide: Catalase-peroxidase (743 aa).

Over residues M1–Q15 the composition is skewed to polar residues. Residues M1–D40 form a disordered region. The segment covering S16–P28 has biased composition (low complexity). Positions W110–Y233 form a cross-link, tryptophyl-tyrosyl-methioninium (Trp-Tyr) (with M-259). The active-site Proton acceptor is H111. The segment at residues Y233–M259 is a cross-link (tryptophyl-tyrosyl-methioninium (Tyr-Met) (with W-110)). A heme b-binding site is contributed by H274. The disordered stretch occupies residues D490–N511.

The protein belongs to the peroxidase family. Peroxidase/catalase subfamily. Homodimer or homotetramer. Heme b is required as a cofactor. In terms of processing, formation of the three residue Trp-Tyr-Met cross-link is important for the catalase, but not the peroxidase activity of the enzyme.

The enzyme catalyses H2O2 + AH2 = A + 2 H2O. The catalysed reaction is 2 H2O2 = O2 + 2 H2O. Its function is as follows. Bifunctional enzyme with both catalase and broad-spectrum peroxidase activity. The protein is Catalase-peroxidase of Mycobacterium marinum (strain ATCC BAA-535 / M).